Here is a 304-residue protein sequence, read N- to C-terminus: Oxygen-dependent coproporphyrinogen-III oxidase (304 aa).

Ser93 lines the substrate pocket. Positions 97 and 107 each coordinate a divalent metal cation. His107 serves as the catalytic Proton donor. Residue 109 to 111 participates in substrate binding; sequence NVR. His146 and His176 together coordinate a divalent metal cation. Residues 241 to 276 are important for dimerization; the sequence is YVEFNLVYDRGTLFGLQSGGRTESILMSLPPQVRWG. 259 to 261 contributes to the substrate binding site; the sequence is GGR.

It belongs to the aerobic coproporphyrinogen-III oxidase family. As to quaternary structure, homodimer. A divalent metal cation serves as cofactor.

Its subcellular location is the cytoplasm. The enzyme catalyses coproporphyrinogen III + O2 + 2 H(+) = protoporphyrinogen IX + 2 CO2 + 2 H2O. It participates in porphyrin-containing compound metabolism; protoporphyrin-IX biosynthesis; protoporphyrinogen-IX from coproporphyrinogen-III (O2 route): step 1/1. Involved in the heme biosynthesis. Catalyzes the aerobic oxidative decarboxylation of propionate groups of rings A and B of coproporphyrinogen-III to yield the vinyl groups in protoporphyrinogen-IX. The protein is Oxygen-dependent coproporphyrinogen-III oxidase of Pseudomonas savastanoi pv. phaseolicola (strain 1448A / Race 6) (Pseudomonas syringae pv. phaseolicola (strain 1448A / Race 6)).